Consider the following 524-residue polypeptide: Glucose-6-phosphate isomerase (524 aa).

Glu322 functions as the Proton donor in the catalytic mechanism. Residues His351 and Lys453 contribute to the active site.

This sequence belongs to the GPI family.

The protein localises to the cytoplasm. It carries out the reaction alpha-D-glucose 6-phosphate = beta-D-fructose 6-phosphate. The protein operates within carbohydrate biosynthesis; gluconeogenesis. It participates in carbohydrate degradation; glycolysis; D-glyceraldehyde 3-phosphate and glycerone phosphate from D-glucose: step 2/4. Functionally, catalyzes the reversible isomerization of glucose-6-phosphate to fructose-6-phosphate. This is Glucose-6-phosphate isomerase from Prochlorococcus marinus (strain NATL2A).